Here is a 947-residue protein sequence, read N- to C-terminus: Bromodomain testis-specific protein (947 aa).

The Bromo 1 domain maps to 27-133; sequence RLTNQLQYLQ…KLFMQKLSQM (107 aa). Asn-109 is a binding site for JQ1. Ser-187 is subject to Phosphoserine. The interval 202 to 228 is disordered; the sequence is QTAAQVTKGVKRKADTTTPATSAVKAS. The Nuclear localization signal motif lies at 209–220; that stretch reads KGVKRKADTTTP. The span at 217–228 shows a compositional bias: polar residues; sequence TTTPATSAVKAS. Residues 267–376 form the Bromo 2 domain; the sequence is VKVTEQLRHC…DVFETHFSKI (110 aa). Disordered regions lie at residues 395-420, 444-511, 610-698, and 882-924; these read ETTGRENTNEASSEGNSSDDSEDERV, PFRK…KPMN, NNQL…IPPE, and NKCS…RRRE. Residues 417–470 are a coiled coil; the sequence is DERVKRLAKLQEQLKAVHQQLQVLSQVPFRKLNKKKEKSKKEKKKEKVNNSNEN. Residues 447–462 show a composition bias toward basic residues; that stretch reads KLNKKKEKSKKEKKKE. Residues 470 to 481 show a composition bias toward basic and acidic residues; that stretch reads NPRKMCEQMRLK. A compositionally biased stretch (basic residues) spans 482–494; the sequence is EKSKRNQPKKRKQ. Residues 500 to 582 form the NET domain; it reads KSEDEDNAKP…ACLRKRPLKP (83 aa). Residues 591–621 adopt a coiled-coil conformation; it reads KEELHSQKKQELEKRLLDVNNQLNSRKRQTK. The span at 637-662 shows a compositional bias: low complexity; that stretch reads LSESSSSSSSSSESESSSSDLSSSDS. Basic and acidic residues-rich tracts occupy residues 674 to 692 and 885 to 924; these read TEVKPNDSPSKENVKKMKN and SGEEQKEHQQSSEAQDKSKLWLLKDRDLARQKEQERRRRE.

Belongs to the BET family. In terms of assembly, interacts with mRNA splicing machinery proteins SRSF2, DDX5, HNRNPK and TARDBP. Interacts with the acetylated N-terminus of histone H1, H2, H3 and H4. Interacts with P-TEFb components CDK9 and CCNT1/cyclin-T1. Interacts with SMARCE1. Interacts with the acetylated N-terminus of histone H1.4, H2A, H2B, H3 and H4. In terms of processing, ubiquitinated in a SPOP-dependent manner, leading to proteasomal degradation. As to expression, testis-specific. A 3-fold higher expression is seen in adult testis than in embryo testis. Expression seems to be correlated with histone H4 hyperacetylation during the haploid phase of spermatogenesis (spermiogenesis). No expression, or very low expression is seen in patients' testes with abnormal spermatogenesis. Expressed in cancers such as non-small cell lung cancer and squamous cell carcinomas of the head and neck as well as of esophagus, but not in melanoma or in cancers of the colon, breast, kidney and bladder.

It localises to the nucleus. In terms of biological role, testis-specific chromatin protein that specifically binds histone H4 acetylated at 'Lys-5' and 'Lys-8' (H4K5ac and H4K8ac, respectively) and plays a key role in spermatogenesis. Required in late pachytene spermatocytes: plays a role in meiotic and post-meiotic cells by binding to acetylated histones at the promoter of specific meiotic and post-meiotic genes, facilitating their activation at the appropriate time. In the post-meiotic phase of spermatogenesis, binds to hyperacetylated histones and participates in their general removal from DNA. Also recognizes and binds a subset of butyrylated histones: able to bind histone H4 butyrylated at 'Lys-8' (H4K8ac), while it is not able to bind H4 butyrylated at 'Lys-5' (H4K5ac). Also acts as a component of the splicing machinery in pachytene spermatocytes and round spermatids and participates in 3'-UTR truncation of specific mRNAs in post-meiotic spermatids. Required for chromocenter organization, a structure comprised of peri-centromeric heterochromatin. This Homo sapiens (Human) protein is Bromodomain testis-specific protein (BRDT).